Here is a 302-residue protein sequence, read N- to C-terminus: N-acetyl-D-glucosamine kinase (302 aa).

ATP is bound by residues 4-11 (GFDVGGTK) and 133-140 (GFGGGLVY). Zn(2+) contacts are provided by His157, Cys177, Cys179, and Cys184.

The protein belongs to the ROK (NagC/XylR) family. NagK subfamily.

It carries out the reaction N-acetyl-D-glucosamine + ATP = N-acetyl-D-glucosamine 6-phosphate + ADP + H(+). It functions in the pathway cell wall biogenesis; peptidoglycan recycling. Functionally, catalyzes the phosphorylation of N-acetyl-D-glucosamine (GlcNAc) derived from cell-wall degradation, yielding GlcNAc-6-P. The protein is N-acetyl-D-glucosamine kinase of Vibrio atlanticus (strain LGP32) (Vibrio splendidus (strain Mel32)).